We begin with the raw amino-acid sequence, 587 residues long: Envelope glycoprotein (587 aa).

The N-terminal stretch at 1-22 (MNFNHHFTWSLVIISQIFQVQA) is a signal peptide. Residues 23 to 527 (GFGDPREALL…TGFHGLLPYV (505 aa)) are Extracellular-facing. Residues asparagine 120 and asparagine 237 are each glycosylated (N-linked (GlcNAc...) asparagine; by host). A CXXC motif is present at residues 248 to 251 (CWLC). 3 cysteine pairs are disulfide-bonded: cysteine 248/cysteine 251, cysteine 248/cysteine 484, and cysteine 476/cysteine 483. 10 N-linked (GlcNAc...) asparagine; by host glycosylation sites follow: asparagine 266, asparagine 271, asparagine 277, asparagine 280, asparagine 295, asparagine 308, asparagine 322, asparagine 328, asparagine 340, and asparagine 358. Residues 399–419 (FIPLVIGLGITTAVSTGTAGL) form a fusion peptide region. 2 coiled-coil regions span residues 420 to 470 (GVSL…LLTA) and 480 to 516 (QEKC…DNPF). The immunosuppression stretch occupies residues 459-475 (LQNRRGLDLLTAEQGGI). The short motif at 476–484 (CLALQEKCC) is the CX6CC element. N-linked (GlcNAc...) asparagine; by host glycosylation occurs at asparagine 488. The chain crosses the membrane as a helical span at residues 528-548 (MPLLGPLLCLLLVLSFGPIIF). The Cytoplasmic segment spans residues 549–587 (NKLMTFIKHQIESIQAKPIQVHYHRLEQEDHGGSYLNLT). The YXXL motif; contains endocytosis signal motif lies at 571–574 (YHRL).

The mature envelope protein (Env) consists of a trimer of SU-TM heterodimers attached by a labile interchain disulfide bond. In terms of processing, specific enzymatic cleavages in vivo yield mature proteins. Envelope glycoproteins are synthesized as an inactive precursor that is N-glycosylated and processed likely by host cell furin or by a furin-like protease in the Golgi to yield the mature SU and TM proteins. The cleavage site between SU and TM requires the minimal sequence [KR]-X-[KR]-R. The R-peptide is released from the C-terminus of the cytoplasmic tail of the TM protein upon particle formation as a result of proteolytic cleavage by the viral protease. Cleavage of this peptide is required for TM to become fusogenic. Post-translationally, the CXXC motif is highly conserved across a broad range of retroviral envelope proteins. It is thought to participate in the formation of a labile disulfide bond possibly with the CX6CC motif present in the transmembrane protein. Isomerization of the intersubunit disulfide bond to an SU intrachain disulfide bond is thought to occur upon receptor recognition in order to allow membrane fusion.

The protein localises to the virion membrane. It localises to the host cell membrane. Functionally, the surface protein (SU) attaches the virus to the host cell by binding to its receptor. This interaction triggers the refolding of the transmembrane protein (TM) and is thought to activate its fusogenic potential by unmasking its fusion peptide. Fusion occurs at the host cell plasma membrane. Its function is as follows. The transmembrane protein (TM) acts as a class I viral fusion protein. Under the current model, the protein has at least 3 conformational states: pre-fusion native state, pre-hairpin intermediate state, and post-fusion hairpin state. During viral and target cell membrane fusion, the coiled coil regions (heptad repeats) assume a trimer-of-hairpins structure, positioning the fusion peptide in close proximity to the C-terminal region of the ectodomain. The formation of this structure appears to drive apposition and subsequent fusion of viral and target cell membranes. Membranes fusion leads to delivery of the nucleocapsid into the cytoplasm. This chain is Envelope glycoprotein (env), found in Simian retrovirus SRV-1.